A 79-amino-acid chain; its full sequence is D-alanyl carrier protein (79 aa).

The 77-residue stretch at 1–77 (MDTKQGVLDI…KIVAKVESLE (77 aa)) folds into the Carrier domain. O-(pantetheine 4'-phosphoryl)serine is present on Ser-35.

This sequence belongs to the DltC family. In terms of processing, 4'-phosphopantetheine is transferred from CoA to a specific serine of apo-DCP.

It is found in the cytoplasm. The protein operates within cell wall biogenesis; lipoteichoic acid biosynthesis. Carrier protein involved in the D-alanylation of lipoteichoic acid (LTA). The loading of thioester-linked D-alanine onto DltC is catalyzed by D-alanine--D-alanyl carrier protein ligase DltA. The DltC-carried D-alanyl group is further transferred to cell membrane phosphatidylglycerol (PG) by forming an ester bond, probably catalyzed by DltD. D-alanylation of LTA plays an important role in modulating the properties of the cell wall in Gram-positive bacteria, influencing the net charge of the cell wall. The polypeptide is D-alanyl carrier protein (Lactobacillus helveticus (strain DPC 4571)).